We begin with the raw amino-acid sequence, 455 residues long: Alcohol acyl transferase 1 allele RGb (455 aa).

Residues His-164 and Asn-385 each act as proton acceptor in the active site.

Belongs to the plant acyltransferase family.

Involved in the biosynthesis of volatile esters which confer ripe apple fruit flavor. Alcohol acyl transferase that can use a wide range of alcohols as substrate to produce esters. In Malus domestica (Apple), this protein is Alcohol acyl transferase 1 allele RGb.